We begin with the raw amino-acid sequence, 122 residues long: Large ribosomal subunit protein uL14 (122 aa).

The protein belongs to the universal ribosomal protein uL14 family. Part of the 50S ribosomal subunit. Forms a cluster with proteins L3 and L19. In the 70S ribosome, L14 and L19 interact and together make contacts with the 16S rRNA in bridges B5 and B8.

In terms of biological role, binds to 23S rRNA. Forms part of two intersubunit bridges in the 70S ribosome. The protein is Large ribosomal subunit protein uL14 of Paraburkholderia phymatum (strain DSM 17167 / CIP 108236 / LMG 21445 / STM815) (Burkholderia phymatum).